A 258-amino-acid chain; its full sequence is Phosphate import ATP-binding protein PstB (258 aa).

Residues 12–253 (LEVKNLNFYY…PARKETEDYI (242 aa)) form the ABC transporter domain. 44–51 (GPSGCGKS) is a binding site for ATP.

It belongs to the ABC transporter superfamily. Phosphate importer (TC 3.A.1.7) family. The complex is composed of two ATP-binding proteins (PstB), two transmembrane proteins (PstC and PstA) and a solute-binding protein (PstS).

It is found in the cell inner membrane. The enzyme catalyses phosphate(out) + ATP + H2O = ADP + 2 phosphate(in) + H(+). Part of the ABC transporter complex PstSACB involved in phosphate import. Responsible for energy coupling to the transport system. The polypeptide is Phosphate import ATP-binding protein PstB (Bordetella pertussis (strain Tohama I / ATCC BAA-589 / NCTC 13251)).